The chain runs to 378 residues: Anhydro-N-acetylmuramic acid kinase (378 aa).

G9 to D16 contributes to the ATP binding site.

This sequence belongs to the anhydro-N-acetylmuramic acid kinase family.

It catalyses the reaction 1,6-anhydro-N-acetyl-beta-muramate + ATP + H2O = N-acetyl-D-muramate 6-phosphate + ADP + H(+). It functions in the pathway amino-sugar metabolism; 1,6-anhydro-N-acetylmuramate degradation. The protein operates within cell wall biogenesis; peptidoglycan recycling. Its function is as follows. Catalyzes the specific phosphorylation of 1,6-anhydro-N-acetylmuramic acid (anhMurNAc) with the simultaneous cleavage of the 1,6-anhydro ring, generating MurNAc-6-P. Is required for the utilization of anhMurNAc either imported from the medium or derived from its own cell wall murein, and thus plays a role in cell wall recycling. This Prochlorococcus marinus (strain NATL1A) protein is Anhydro-N-acetylmuramic acid kinase.